We begin with the raw amino-acid sequence, 296 residues long: MCAERLGQFVTLALVFATLDPARGTDSTNPPEGPQDRGSQQKGRLSLQNTAEIQHCLVNAGDVGCGVFECFENNSCEIQGLHGICMTFLHNAGKFDAQGKSFIKDALRCKAHALRHKFGCISRKCPAIREMVYQLQRECYLKHDLCSAAQENVVVIVEMIHFKDLLLHEPYVDLVNLLLTCGEDVREAVTRSVQAQCEQSWGGLCSILSFCTSNIQRPPTAAPEHQPLADRAQLSRPYHRDTDHHLTANRGAKGERGSKSHLHAHARGGAGGQSAQGPSGSSEWEDEQSEYSDIRR.

A signal peptide spans 1-24; sequence MCAERLGQFVTLALVFATLDPARG. Residues 22–44 form a disordered region; that stretch reads ARGTDSTNPPEGPQDRGSQQKGR. Asn-73 carries N-linked (GlcNAc...) asparagine glycosylation. Positions 236–296 are disordered; that stretch reads RPYHRDTDHH…EQSEYSDIRR (61 aa). The segment covering 238 to 258 has biased composition (basic and acidic residues); sequence YHRDTDHHLTANRGAKGERGS.

The protein belongs to the stanniocalcin family. Homodimer; disulfide-linked. Expressed in a variety of tissues. Strongly expressed in ovary and to a lesser extent in kidney.

The protein localises to the secreted. In terms of biological role, has an anti-hypocalcemic action on calcium and phosphate homeostasis. This chain is Stanniocalcin-2 (Stc2), found in Rattus norvegicus (Rat).